The sequence spans 473 residues: Notchless protein homolog (473 aa).

The interval 9 to 91 is ubiquitin-like (UBL) domain; sequence GKTVMCLLTD…VLTIVYQQQA (83 aa). WD repeat units follow at residues 107–146, 149–188, 192–236, 239–277, 313–354, 358–399, 400–439, and 442–473; these read GHAE…PLFT, GHKN…LEGS, GHKK…SIIC, GHTL…LIRE, EKQK…QPKK, GHQQ…TVFR, GHVG…LKQD, and GHAD…LWKG. Residues 417 to 432 carry the DWD box motif; that stretch reads LLSGSKDSTLKIWEIR.

Belongs to the NLE1/RSA4 family. In terms of assembly, associates with the pre-60S ribosomal particle. As to expression, constitutively and ubiquitously expressed.

It localises to the nucleus. It is found in the nucleolus. Required for female gametophyte development. In Arabidopsis thaliana (Mouse-ear cress), this protein is Notchless protein homolog.